The sequence spans 314 residues: Putative 4-hydroxy-2-oxoglutarate aldolase, mitochondrial (314 aa).

50–51 (TN) contributes to the substrate binding site. The active-site Schiff-base intermediate with substrate is the Lys-171.

Belongs to the DapA family.

It carries out the reaction (4S)-4-hydroxy-2-oxoglutarate = glyoxylate + pyruvate. It catalyses the reaction (4R)-4-hydroxy-2-oxoglutarate = glyoxylate + pyruvate. May catalyze the final step in the metabolic pathway of hydroxyproline. This is Putative 4-hydroxy-2-oxoglutarate aldolase, mitochondrial from Coccidioides immitis (strain RS) (Valley fever fungus).